The sequence spans 474 residues: Glutamyl-tRNA(Gln) amidotransferase subunit A (474 aa).

Residues lysine 76 and serine 151 each act as charge relay system in the active site. The Acyl-ester intermediate role is filled by serine 175.

Belongs to the amidase family. GatA subfamily. Heterotrimer of A, B and C subunits.

It catalyses the reaction L-glutamyl-tRNA(Gln) + L-glutamine + ATP + H2O = L-glutaminyl-tRNA(Gln) + L-glutamate + ADP + phosphate + H(+). Its function is as follows. Allows the formation of correctly charged Gln-tRNA(Gln) through the transamidation of misacylated Glu-tRNA(Gln) in organisms which lack glutaminyl-tRNA synthetase. The reaction takes place in the presence of glutamine and ATP through an activated gamma-phospho-Glu-tRNA(Gln). This is Glutamyl-tRNA(Gln) amidotransferase subunit A from Chlorobium limicola (strain DSM 245 / NBRC 103803 / 6330).